A 364-amino-acid chain; its full sequence is Protein Wnt-6 (364 aa).

The first 23 residues, 1–23 (MLPPVPSRLGLLLLLLCPAHVDG), serve as a signal peptide directing secretion. Intrachain disulfides connect cysteine 75–cysteine 86, cysteine 123–cysteine 131, cysteine 133–cysteine 171, cysteine 221–cysteine 235, cysteine 223–cysteine 230, cysteine 293–cysteine 324, cysteine 309–cysteine 319, cysteine 323–cysteine 363, cysteine 339–cysteine 354, cysteine 341–cysteine 351, and cysteine 346–cysteine 347. A glycan (N-linked (GlcNAc...) asparagine) is linked at asparagine 85. Residues 140-162 (APPRPSGLLGTPGPPGPTGSPDA) are disordered. Residue serine 227 is the site of O-palmitoleoyl serine; by PORCN attachment. Asparagine 310 is a glycosylation site (N-linked (GlcNAc...) asparagine).

This sequence belongs to the Wnt family. In terms of assembly, interacts with PORCN. Palmitoleoylation is required for efficient binding to frizzled receptors. Depalmitoleoylation leads to Wnt signaling pathway inhibition. As to expression, detected in ileum, colon and stomach (at protein level).

It localises to the secreted. It is found in the extracellular space. The protein localises to the extracellular matrix. Its function is as follows. Ligand for members of the frizzled family of seven transmembrane receptors. Probable developmental protein. May be a signaling molecule which affects the development of discrete regions of tissues. Is likely to signal over only few cell diameters. This Mus musculus (Mouse) protein is Protein Wnt-6 (Wnt6).